A 126-amino-acid polypeptide reads, in one-letter code: Histone H2B type 2-E (126 aa).

Residues 1–12 (MPEPAKSAPAPK) show a composition bias toward low complexity. Residues 1–35 (MPEPAKSAPAPKKGSKKAVTKAQKKDGKKRKRSRK) form a disordered region. Pro-2 is subject to N-acetylproline. An ADP-ribosyl glutamic acid modification is found at Glu-3. The residue at position 6 (Lys-6) is an N6-(2-hydroxyisobutyryl)lysine; alternate. N6-(beta-hydroxybutyryl)lysine; alternate is present on Lys-6. At Lys-6 the chain carries N6-acetyllysine; alternate. Residue Lys-6 is modified to N6-butyryllysine; alternate. The residue at position 6 (Lys-6) is an N6-crotonyllysine; alternate. Lys-6 is subject to N6-lactoyllysine; alternate. Lys-6 participates in a covalent cross-link: Glycyl lysine isopeptide (Lys-Gly) (interchain with G-Cter in SUMO2); alternate. An ADP-ribosylserine modification is found at Ser-7. Lys-12 is modified (N6-(beta-hydroxybutyryl)lysine; alternate). Lys-12 and Lys-13 each carry N6-acetyllysine; alternate. 2 positions are modified to N6-crotonyllysine; alternate: Lys-12 and Lys-13. An N6-lactoyllysine; alternate modification is found at Lys-12. N6-(2-hydroxyisobutyryl)lysine; alternate is present on Lys-13. Ser-15 is modified (phosphoserine; by STK4/MST1). N6-acetyllysine; alternate occurs at positions 16, 17, 21, and 24. Lys-16, Lys-17, Lys-21, and Lys-24 each carry N6-crotonyllysine; alternate. Lys-16, Lys-17, Lys-21, and Lys-24 each carry N6-lactoyllysine; alternate. Lys-17 and Lys-21 each carry N6-(beta-hydroxybutyryl)lysine; alternate. N6-glutaryllysine; alternate is present on Lys-17. N6-(2-hydroxyisobutyryl)lysine; alternate occurs at positions 21 and 24. The residue at position 21 (Lys-21) is an N6-butyryllysine; alternate. Lys-21 is covalently cross-linked (Glycyl lysine isopeptide (Lys-Gly) (interchain with G-Cter in SUMO2); alternate). N6-(2-hydroxyisobutyryl)lysine is present on Lys-25. Lys-35 carries the post-translational modification N6-(2-hydroxyisobutyryl)lysine; alternate. N6-(beta-hydroxybutyryl)lysine; alternate is present on Lys-35. Position 35 is an N6-crotonyllysine; alternate (Lys-35). Lys-35 is subject to N6-glutaryllysine; alternate. The residue at position 35 (Lys-35) is an N6-succinyllysine; alternate. Lys-35 participates in a covalent cross-link: Glycyl lysine isopeptide (Lys-Gly) (interchain with G-Cter in ubiquitin); alternate. At Glu-36 the chain carries PolyADP-ribosyl glutamic acid. Position 37 is a phosphoserine; by AMPK (Ser-37). N6-(2-hydroxyisobutyryl)lysine; alternate occurs at positions 44, 47, and 58. Lys-44 is modified (N6-lactoyllysine; alternate). N6-glutaryllysine; alternate occurs at positions 44 and 47. Lys-47 is modified (N6-methyllysine; alternate). Lys-58 bears the N6,N6-dimethyllysine; alternate mark. Residue Arg-80 is modified to Dimethylated arginine. An N6-(2-hydroxyisobutyryl)lysine; alternate modification is found at Lys-86. Lys-86 is modified (N6-(beta-hydroxybutyryl)lysine; alternate). Lys-86 is modified (N6-acetyllysine; alternate). Residue Lys-86 is modified to N6-lactoyllysine; alternate. Residue Lys-86 is modified to N6,N6,N6-trimethyllysine; alternate. Arg-87 and Arg-93 each carry omega-N-methylarginine. N6-(2-hydroxyisobutyryl)lysine; alternate is present on Lys-109. Lys-109 carries the N6-lactoyllysine; alternate modification. The residue at position 109 (Lys-109) is an N6-glutaryllysine; alternate. Lys-109 is modified (N6-methyllysine; alternate). Ser-113 carries an O-linked (GlcNAc) serine glycan. The residue at position 116 (Thr-116) is a Phosphothreonine. Residues Lys-117 and Lys-121 each carry the N6-(2-hydroxyisobutyryl)lysine; alternate modification. N6-(beta-hydroxybutyryl)lysine; alternate is present on residues Lys-117 and Lys-121. Lys-117 and Lys-121 each carry N6-lactoyllysine; alternate. N6-glutaryllysine; alternate is present on residues Lys-117 and Lys-121. 2 positions are modified to N6-succinyllysine; alternate: Lys-117 and Lys-121. Lys-117 is modified (N6-malonyllysine; alternate). Lys-117 carries the N6-methylated lysine; alternate modification. A Glycyl lysine isopeptide (Lys-Gly) (interchain with G-Cter in ubiquitin); alternate cross-link involves residue Lys-121.

It belongs to the histone H2B family. In terms of assembly, the nucleosome is a histone octamer containing two molecules each of H2A, H2B, H3 and H4 assembled in one H3-H4 heterotetramer and two H2A-H2B heterodimers. The octamer wraps approximately 147 bp of DNA. Post-translationally, monoubiquitination at Lys-35 (H2BK34Ub) by the MSL1/MSL2 dimer is required for histone H3 'Lys-4' (H3K4me) and 'Lys-79' (H3K79me) methylation and transcription activation at specific gene loci, such as HOXA9 and MEIS1 loci. Similarly, monoubiquitination at Lys-121 (H2BK120Ub) by the RNF20/40 complex gives a specific tag for epigenetic transcriptional activation and is also prerequisite for histone H3 'Lys-4' and 'Lys-79' methylation. It also functions cooperatively with the FACT dimer to stimulate elongation by RNA polymerase II. H2BK120Ub also acts as a regulator of mRNA splicing: deubiquitination by USP49 is required for efficient cotranscriptional splicing of a large set of exons. In terms of processing, phosphorylation at Ser-37 (H2BS36ph) by AMPK in response to stress promotes transcription. Phosphorylated on Ser-15 (H2BS14ph) by STK4/MST1 during apoptosis; which facilitates apoptotic chromatin condensation. Also phosphorylated on Ser-15 in response to DNA double strand breaks (DSBs), and in correlation with somatic hypermutation and immunoglobulin class-switch recombination. GlcNAcylation at Ser-113 promotes monoubiquitination of Lys-121. It fluctuates in response to extracellular glucose, and associates with transcribed genes. Post-translationally, ADP-ribosylated by PARP1 or PARP2 on Ser-7 (H2BS6ADPr) in response to DNA damage. H2BS6ADPr promotes recruitment of CHD1L. Mono-ADP-ribosylated on Glu-3 (H2BE2ADPr) by PARP3 in response to single-strand breaks. Poly ADP-ribosylation on Glu-36 (H2BE35ADPr) by PARP1 regulates adipogenesis: it inhibits phosphorylation at Ser-37 (H2BS36ph), thereby blocking expression of pro-adipogenetic genes. In terms of processing, crotonylation (Kcr) is specifically present in male germ cells and marks testis-specific genes in post-meiotic cells, including X-linked genes that escape sex chromosome inactivation in haploid cells. Crotonylation marks active promoters and enhancers and confers resistance to transcriptional repressors. It is also associated with post-meiotically activated genes on autosomes. Lactylated in macrophages by EP300/P300 by using lactoyl-CoA directly derived from endogenous or exogenous lactate, leading to stimulates gene transcription.

It localises to the nucleus. Its subcellular location is the chromosome. Its function is as follows. Core component of nucleosome. Nucleosomes wrap and compact DNA into chromatin, limiting DNA accessibility to the cellular machineries which require DNA as a template. Histones thereby play a central role in transcription regulation, DNA repair, DNA replication and chromosomal stability. DNA accessibility is regulated via a complex set of post-translational modifications of histones, also called histone code, and nucleosome remodeling. Has broad antibacterial activity. May contribute to the formation of the functional antimicrobial barrier of the colonic epithelium, and to the bactericidal activity of amniotic fluid. The sequence is that of Histone H2B type 2-E from Homo sapiens (Human).